The sequence spans 197 residues: Dephospho-CoA kinase (197 aa).

The DPCK domain occupies 2 to 197 (IIGLTGGIAS…GAIKDLANLV (196 aa)). Position 10–15 (10–15 (ASGKST)) interacts with ATP.

The protein belongs to the CoaE family.

The protein resides in the cytoplasm. It carries out the reaction 3'-dephospho-CoA + ATP = ADP + CoA + H(+). Its pathway is cofactor biosynthesis; coenzyme A biosynthesis; CoA from (R)-pantothenate: step 5/5. Its function is as follows. Catalyzes the phosphorylation of the 3'-hydroxyl group of dephosphocoenzyme A to form coenzyme A. The chain is Dephospho-CoA kinase from Streptococcus thermophilus (strain CNRZ 1066).